The chain runs to 155 residues: Ribosomal RNA large subunit methyltransferase H (155 aa).

Residues Leu73, Gly104, and 123–128 (ISKMTF) each bind S-adenosyl-L-methionine.

It belongs to the RNA methyltransferase RlmH family. In terms of assembly, homodimer.

It localises to the cytoplasm. The enzyme catalyses pseudouridine(1915) in 23S rRNA + S-adenosyl-L-methionine = N(3)-methylpseudouridine(1915) in 23S rRNA + S-adenosyl-L-homocysteine + H(+). Functionally, specifically methylates the pseudouridine at position 1915 (m3Psi1915) in 23S rRNA. This is Ribosomal RNA large subunit methyltransferase H from Francisella tularensis subsp. novicida (strain U112).